A 1732-amino-acid chain; its full sequence is Serine/threonine-protein kinase MRCK alpha (1732 aa).

One can recognise a Protein kinase domain in the interval 77 to 343 (FEILKVIGRG…IEDFKKHPFF (267 aa)). Residues 83 to 91 (IGRGAFGEV) and Lys106 contribute to the ATP site. Residue Asp201 is the Proton acceptor of the active site. Phosphoserine; by autocatalysis occurs at positions 222 and 234. Thr240 is modified (phosphothreonine; by autocatalysis). One can recognise an AGC-kinase C-terminal domain in the interval 344-414 (SGIDWDNIRN…TSSCVLSDRS (71 aa)). Coiled-coil stretches lie at residues 437–820 (NNLA…WEAQ) and 880–943 (LELQ…SEKG). The tract at residues 968–1003 (ERSPSCTPASKGRRTVDSTPLSVHTPTLRKKGCPGS) is disordered. The segment at 1012-1062 (THQFFVKSFTTPTKCHQCTSLMVGLIRQGCSCEVCGFSCHITCVNKAPTTC) adopts a Phorbol-ester/DAG-type zinc-finger fold. The 120-residue stretch at 1082–1201 (GTAYEGHVRI…WVGVLSELHK (120 aa)) folds into the PH domain. Ser1127 bears the Phosphoserine mark. Positions 1227-1499 (IKTTQAAAII…RPLNNEGSLN (273 aa)) constitute a CNH domain. Ser1545 carries the post-translational modification Phosphoserine. A CRIB domain is found at 1571-1584 (ISNPTNFNHIAHMG). The tract at residues 1591–1732 (ILKDLPMNPR…ESTDRGSWDP (142 aa)) is disordered. The segment covering 1604–1619 (SRTVFSGSVSIPSITK) has biased composition (polar residues). Residues Ser1611, Ser1613, Ser1629, Ser1651, Ser1664, Ser1669, and Ser1693 each carry the phosphoserine modification. Residues 1625 to 1640 (GRSMSASSGLSARSSA) are compositionally biased toward low complexity. A compositionally biased stretch (low complexity) spans 1665 to 1674 (PSEGSLSSGG). The span at 1697–1707 (STASNSSNLSS) shows a compositional bias: low complexity. A phosphoserine mark is found at Ser1719 and Ser1721.

It belongs to the protein kinase superfamily. AGC Ser/Thr protein kinase family. DMPK subfamily. As to quaternary structure, homodimer and homotetramer via the coiled coil regions. Interacts tightly with GTP-bound but not GDP-bound CDC42. Forms a tripartite complex with MYO18A and LURAP1 with the latter acting as an adapter connecting CDC42BPA and MYO18A. LURAP1 binding results in activation of CDC42BPA by abolition of its negative autoregulation. Interacts with LURAP1. Interacts (via AGC-kinase C-terminal domain) with FAM89B/LRAP25 (via LRR repeat). Forms a tripartite complex with FAM89B/LRAP25 and LIMK1. Mg(2+) serves as cofactor. Proteolytically cleaved by caspases upon apoptosis induction. The cleavage at Asp-478 by CASP3 increases its kinase activity (in vitro). Abundant in the heart, brain, skeletal muscle, kidney, and pancreas, with little or no expression in the lung and liver.

The protein localises to the cytoplasm. Its subcellular location is the cell projection. It localises to the lamellipodium. It carries out the reaction L-seryl-[protein] + ATP = O-phospho-L-seryl-[protein] + ADP + H(+). The catalysed reaction is L-threonyl-[protein] + ATP = O-phospho-L-threonyl-[protein] + ADP + H(+). Maintained in an inactive, closed conformation by an interaction between the kinase domain and the negative autoregulatory C-terminal coiled-coil region. Agonist binding to the phorbol ester binding site disrupts this, releasing the kinase domain to allow N-terminus-mediated dimerization and kinase activation by transautophosphorylation. Inhibited by chelerythrine chloride. Functionally, serine/threonine-protein kinase which is an important downstream effector of CDC42 and plays a role in the regulation of cytoskeleton reorganization and cell migration. Regulates actin cytoskeletal reorganization via phosphorylation of PPP1R12C and MYL9/MLC2. In concert with MYO18A and LURAP1, is involved in modulating lamellar actomyosin retrograde flow that is crucial to cell protrusion and migration. Phosphorylates: PPP1R12A, LIMK1 and LIMK2. May play a role in TFRC-mediated iron uptake. In concert with FAM89B/LRAP25 mediates the targeting of LIMK1 to the lamellipodium resulting in its activation and subsequent phosphorylation of CFL1 which is important for lamellipodial F-actin regulation. Triggers the formation of an extrusion apical actin ring required for epithelial extrusion of apoptotic cells. The polypeptide is Serine/threonine-protein kinase MRCK alpha (Homo sapiens (Human)).